A 105-amino-acid polypeptide reads, in one-letter code: Small ribosomal subunit protein uS10 (105 aa).

The protein belongs to the universal ribosomal protein uS10 family. As to quaternary structure, part of the 30S ribosomal subunit.

Its function is as follows. Involved in the binding of tRNA to the ribosomes. The sequence is that of Small ribosomal subunit protein uS10 from Rickettsia prowazekii (strain Madrid E).